The chain runs to 588 residues: Aspartate--tRNA ligase (588 aa).

Residue glutamate 177 coordinates L-aspartate. An aspartate region spans residues 201 to 204; that stretch reads QLFK. Arginine 223 contributes to the L-aspartate binding site. Residues 223–225 and glutamine 232 each bind ATP; that span reads RDE. Position 451 (histidine 451) interacts with L-aspartate. Glutamate 485 provides a ligand contact to ATP. Residue arginine 492 participates in L-aspartate binding. Residue 537–540 participates in ATP binding; that stretch reads GLDR.

This sequence belongs to the class-II aminoacyl-tRNA synthetase family. Type 1 subfamily. As to quaternary structure, homodimer.

The protein localises to the cytoplasm. The catalysed reaction is tRNA(Asp) + L-aspartate + ATP = L-aspartyl-tRNA(Asp) + AMP + diphosphate. Catalyzes the attachment of L-aspartate to tRNA(Asp) in a two-step reaction: L-aspartate is first activated by ATP to form Asp-AMP and then transferred to the acceptor end of tRNA(Asp). In Staphylococcus carnosus (strain TM300), this protein is Aspartate--tRNA ligase.